The primary structure comprises 141 residues: Transcriptional regulator MraZ (141 aa).

2 consecutive SpoVT-AbrB domains span residues 5 to 47 (EYNH…PNEE) and 75 to 118 (AADC…SKER).

It belongs to the MraZ family. In terms of assembly, forms oligomers.

The protein localises to the cytoplasm. It is found in the nucleoid. The sequence is that of Transcriptional regulator MraZ from Lachnoclostridium phytofermentans (strain ATCC 700394 / DSM 18823 / ISDg) (Clostridium phytofermentans).